Here is a 407-residue protein sequence, read N- to C-terminus: tRNA (guanine(26)-N(2))-dimethyltransferase (407 aa).

The Trm1 methyltransferase domain maps to 10 to 400; the sequence is AVTHEGRSII…APWGEVLEAV (391 aa). S-adenosyl-L-methionine contacts are provided by Arg50, Arg82, Asp99, and Glu128.

This sequence belongs to the class I-like SAM-binding methyltransferase superfamily. Trm1 family.

The enzyme catalyses guanosine(26) in tRNA + 2 S-adenosyl-L-methionine = N(2)-dimethylguanosine(26) in tRNA + 2 S-adenosyl-L-homocysteine + 2 H(+). In terms of biological role, dimethylates a single guanine residue at position 26 of a number of tRNAs using S-adenosyl-L-methionine as donor of the methyl groups. The sequence is that of tRNA (guanine(26)-N(2))-dimethyltransferase from Aeropyrum pernix (strain ATCC 700893 / DSM 11879 / JCM 9820 / NBRC 100138 / K1).